Consider the following 207-residue polypeptide: LexA repressor (207 aa).

The H-T-H motif DNA-binding region spans 28-48; that stretch reads VREIGEAVGLASSSTVHGHLA. Residues serine 129 and lysine 167 each act as for autocatalytic cleavage activity in the active site.

Belongs to the peptidase S24 family. As to quaternary structure, homodimer.

The catalysed reaction is Hydrolysis of Ala-|-Gly bond in repressor LexA.. In terms of biological role, represses a number of genes involved in the response to DNA damage (SOS response), including recA and lexA. In the presence of single-stranded DNA, RecA interacts with LexA causing an autocatalytic cleavage which disrupts the DNA-binding part of LexA, leading to derepression of the SOS regulon and eventually DNA repair. The polypeptide is LexA repressor (Geobacillus kaustophilus (strain HTA426)).